A 200-amino-acid chain; its full sequence is Ras-related protein RABF2a (200 aa).

17–25 (GDVGAGKSS) serves as a coordination point for GTP. Residues 39–47 (QESTIGAAF) carry the Effector region motif. GTP contacts are provided by residues 65-69 (DTAGQ), 123-126 (NKAD), and 153-154 (SA). 2 S-geranylgeranyl cysteine lipidation sites follow: C198 and C199.

Belongs to the small GTPase superfamily. Rab family. As to quaternary structure, interacts with VPS9A. Interacts with EREX (via PX domain). Binds to VPS3. As to expression, high in stem, root, and inflorescence.

The protein localises to the endosome membrane. Its subcellular location is the prevacuolar compartment membrane. In terms of biological role, involved in the trafficking of soluble cargo proteins from the prevacuolar compartment to the central vacuole. Involved in vacuolar transport of storage proteins with EREX as effector. Regulates membrane trafficking to protein storage vacuoles (PSVs). This is Ras-related protein RABF2a (RABF2A) from Arabidopsis thaliana (Mouse-ear cress).